A 315-amino-acid chain; its full sequence is ATP synthase gamma chain (315 aa).

It belongs to the ATPase gamma chain family. In terms of assembly, F-type ATPases have 2 components, CF(1) - the catalytic core - and CF(0) - the membrane proton channel. CF(1) has five subunits: alpha(3), beta(3), gamma(1), delta(1), epsilon(1). CF(0) has three main subunits: a, b and c.

The protein localises to the cell membrane. Functionally, produces ATP from ADP in the presence of a proton gradient across the membrane. The gamma chain is believed to be important in regulating ATPase activity and the flow of protons through the CF(0) complex. The protein is ATP synthase gamma chain of Latilactobacillus sakei subsp. sakei (strain 23K) (Lactobacillus sakei subsp. sakei).